Reading from the N-terminus, the 373-residue chain is Inhibitor of nuclear factor kappa-B kinase-interacting protein (373 aa).

Over residues 1-11 the composition is skewed to basic residues; that stretch reads MSEVKSRKKPG. Residues 1 to 38 form a disordered region; the sequence is MSEVKSRKKPGPKVAAPEPEKRSDGRKNPEARGDAGWA. The segment covering 18-33 has biased composition (basic and acidic residues); sequence EPEKRSDGRKNPEARG. A helical transmembrane segment spans residues 43 to 59; sequence GLSLLSLAMTLGLAWLV. Coiled coils occupy residues 86 to 257 and 285 to 324; these read LQSK…NKLS and QDLI…TLEG. N-linked (GlcNAc...) asparagine glycosylation is present at N151.

N-glycosylated at Asn-151.

Its subcellular location is the endoplasmic reticulum membrane. In terms of biological role, target of p53/TP53 with pro-apoptotic function. This Mus musculus (Mouse) protein is Inhibitor of nuclear factor kappa-B kinase-interacting protein (Ikbip).